A 112-amino-acid polypeptide reads, in one-letter code: SPbeta prophage-derived uncharacterized protein YoqB (112 aa).

This chain is SPbeta prophage-derived uncharacterized protein YoqB (yoqB), found in Bacillus subtilis (strain 168).